The chain runs to 291 residues: Isopentenyl-diphosphate Delta-isomerase I, chloroplastic (291 aa).

The transit peptide at 1 to 52 (MSTASLFSFPSFHLRSLLPSLSSSSSSSSSRFAPPRLSPIRSPAPRTQLSVR) directs the protein to the chloroplast. Serine 2 carries the N-acetylthreonine modification. Over residues 20–39 (SLSSSSSSSSSRFAPPRLSP) the composition is skewed to low complexity. Positions 20–43 (SLSSSSSSSSSRFAPPRLSPIRSP) are disordered. Lysine 95 serves as a coordination point for substrate. The Mg(2+) site is built by histidine 99 and histidine 111. A Nudix hydrolase domain is found at 109 to 261 (LLHRAFSVFL…AVKLSPWFRL (153 aa)). Substrate-binding residues include arginine 130 and lysine 134. The active site involves cysteine 146. Serine 147 serves as a coordination point for substrate. The Nudix box motif lies at 147-177 (SHPLYRESELIEENVLGVRNAAQRKLFDELG). Residues glutamate 206 and glutamate 208 each contribute to the Mg(2+) site. The active site involves glutamate 208.

The protein belongs to the IPP isomerase type 1 family. It depends on Mg(2+) as a cofactor.

It is found in the plastid. It localises to the chloroplast. The protein resides in the cytoplasm. It catalyses the reaction isopentenyl diphosphate = dimethylallyl diphosphate. The protein operates within isoprenoid biosynthesis; dimethylallyl diphosphate biosynthesis; dimethylallyl diphosphate from isopentenyl diphosphate: step 1/1. It participates in porphyrin-containing compound metabolism; chlorophyll biosynthesis. Catalyzes the 1,3-allylic rearrangement of the homoallylic substrate isopentenyl (IPP) to its highly electrophilic allylic isomer, dimethylallyl diphosphate (DMAPP). The sequence is that of Isopentenyl-diphosphate Delta-isomerase I, chloroplastic (IPP1) from Arabidopsis thaliana (Mouse-ear cress).